The sequence spans 155 residues: Transcriptional repressor NrdR (155 aa).

A zinc finger lies at 3–34 (CPYCQNADTRVVDSRLIGEGEQVRRRRQCPSC). Residues 49–139 (PRVVKSDGRR…VYRRFEDVGA (91 aa)) enclose the ATP-cone domain.

The protein belongs to the NrdR family. Zn(2+) serves as cofactor.

Negatively regulates transcription of bacterial ribonucleotide reductase nrd genes and operons by binding to NrdR-boxes. This is Transcriptional repressor NrdR from Halorhodospira halophila (strain DSM 244 / SL1) (Ectothiorhodospira halophila (strain DSM 244 / SL1)).